The sequence spans 206 residues: Guanylate kinase (206 aa).

Residues 6–185 (GAILVLSGPS…AAKTLRIIAD (180 aa)) enclose the Guanylate kinase-like domain. 13 to 20 (GPSGAGKS) contributes to the ATP binding site.

The protein belongs to the guanylate kinase family.

It is found in the cytoplasm. It carries out the reaction GMP + ATP = GDP + ADP. Its function is as follows. Essential for recycling GMP and indirectly, cGMP. This chain is Guanylate kinase, found in Sulfurimonas denitrificans (strain ATCC 33889 / DSM 1251) (Thiomicrospira denitrificans (strain ATCC 33889 / DSM 1251)).